Consider the following 691-residue polypeptide: Elongation factor G (691 aa).

A tr-type G domain is found at 8 to 282 (ERVRNIGIAA…AVIDYLPAPV (275 aa)). GTP-binding positions include 17–24 (AHIDAGKT), 81–85 (DTPGH), and 135–138 (NKMD).

Belongs to the TRAFAC class translation factor GTPase superfamily. Classic translation factor GTPase family. EF-G/EF-2 subfamily.

It is found in the cytoplasm. Catalyzes the GTP-dependent ribosomal translocation step during translation elongation. During this step, the ribosome changes from the pre-translocational (PRE) to the post-translocational (POST) state as the newly formed A-site-bound peptidyl-tRNA and P-site-bound deacylated tRNA move to the P and E sites, respectively. Catalyzes the coordinated movement of the two tRNA molecules, the mRNA and conformational changes in the ribosome. This is Elongation factor G from Synechococcus sp. (strain CC9605).